Reading from the N-terminus, the 185-residue chain is Ubiquitin-conjugating enzyme E2 2 (185 aa).

The 147-residue stretch at proline 4–leucine 150 folds into the UBC core domain. Cysteine 88 (glycyl thioester intermediate) is an active-site residue. Positions tryptophan 149–alanine 173 are enriched in acidic residues. Positions tryptophan 149 to alanine 185 are disordered.

The protein belongs to the ubiquitin-conjugating enzyme family.

Its subcellular location is the cytoplasm. The protein localises to the nucleus. The catalysed reaction is S-ubiquitinyl-[E1 ubiquitin-activating enzyme]-L-cysteine + [E2 ubiquitin-conjugating enzyme]-L-cysteine = [E1 ubiquitin-activating enzyme]-L-cysteine + S-ubiquitinyl-[E2 ubiquitin-conjugating enzyme]-L-cysteine.. Its pathway is protein modification; protein ubiquitination. Catalyzes the covalent attachment of ubiquitin to other proteins. Plays a role in transcription regulation by catalyzing the monoubiquitination of histone H2B to form H2BK123ub1. H2BK123ub1 gives a specific tag for epigenetic transcriptional activation and is also a prerequisite for H3K4me and H3K79me formation. Also involved in postreplication repair of UV-damaged DNA, in N-end rule-dependent protein degradation and in sporulation. The protein is Ubiquitin-conjugating enzyme E2 2 (UBC2) of Mycosarcoma maydis (Corn smut fungus).